The chain runs to 398 residues: Dual-specificity RNA methyltransferase RlmN (398 aa).

Residue E100 is the Proton acceptor of the active site. The 240-residue stretch at 106-345 folds into the Radical SAM core domain; sequence DGDRGTLCVS…TTVRTTRGDD (240 aa). An intrachain disulfide couples C113 to C350. [4Fe-4S] cluster is bound by residues C120, C124, and C127. S-adenosyl-L-methionine contacts are provided by residues 174-175, S206, 228-230, and N307; these read GE and SLH. C350 (S-methylcysteine intermediate) is an active-site residue.

It belongs to the radical SAM superfamily. RlmN family. Requires [4Fe-4S] cluster as cofactor.

It localises to the cytoplasm. It catalyses the reaction adenosine(2503) in 23S rRNA + 2 reduced [2Fe-2S]-[ferredoxin] + 2 S-adenosyl-L-methionine = 2-methyladenosine(2503) in 23S rRNA + 5'-deoxyadenosine + L-methionine + 2 oxidized [2Fe-2S]-[ferredoxin] + S-adenosyl-L-homocysteine. It carries out the reaction adenosine(37) in tRNA + 2 reduced [2Fe-2S]-[ferredoxin] + 2 S-adenosyl-L-methionine = 2-methyladenosine(37) in tRNA + 5'-deoxyadenosine + L-methionine + 2 oxidized [2Fe-2S]-[ferredoxin] + S-adenosyl-L-homocysteine. Specifically methylates position 2 of adenine 2503 in 23S rRNA and position 2 of adenine 37 in tRNAs. m2A2503 modification seems to play a crucial role in the proofreading step occurring at the peptidyl transferase center and thus would serve to optimize ribosomal fidelity. The polypeptide is Dual-specificity RNA methyltransferase RlmN (Saccharophagus degradans (strain 2-40 / ATCC 43961 / DSM 17024)).